The following is a 416-amino-acid chain: Pre-mRNA-splicing factor slu-7 (416 aa).

The segment at 1–34 (MPPPPPNRREQATAAPSSTDKSETGAGAARKEDN) is disordered. The CCHC-type zinc-finger motif lies at 95-112 (GACENCGAMGHKKKDCLE). 2 stretches are compositionally biased toward basic and acidic residues: residues 168–179 (RRALQGDQKTPD) and 188–213 (DDKS…QSMR). The segment at 168–213 (RRALQGDQKTPDGEGADGPEDDKSGFKYDEESDMGRDRATTKQSMR) is disordered.

This sequence belongs to the SLU7 family. As to quaternary structure, associated with the spliceosome.

Its subcellular location is the nucleus. Involved in pre-mRNA splicing. The polypeptide is Pre-mRNA-splicing factor slu-7 (slu-7) (Neurospora crassa (strain ATCC 24698 / 74-OR23-1A / CBS 708.71 / DSM 1257 / FGSC 987)).